The following is a 182-amino-acid chain: ADP-ribosylation factor 1 (182 aa).

A lipid anchor (N-myristoyl glycine) is attached at Gly2. Residues 3-16 (NVFANLFKGLFGKK) are important for the stable binding to the membranes. GTP-binding positions include 24-32 (GLDAAGKTT), 126-129 (NKQD), and Ala160.

This sequence belongs to the small GTPase superfamily. Arf family.

It is found in the golgi apparatus membrane. The protein localises to the cytoplasm. The protein resides in the cytosol. It carries out the reaction GTP + H2O = GDP + phosphate + H(+). Alternates between an inactive GDP-bound form and an active GTP-bound form. Activated by a guanine nucleotide-exchange factor (GEF) and inactivated by GTPase-activating protein (GAP). Its function is as follows. Small GTPase involved in protein trafficking between different compartments. Modulates vesicle budding and uncoating within the Golgi complex. In its GTP-bound form, triggers the recruitment of coatomer proteins to the Golgi membrane. The hydrolysis of ARF1-bound GTP, which is mediated by ARFGAPs proteins, is required for dissociation of coat proteins from Golgi membranes and vesicles. Has a role in eye development. Required for cleavage furrow ingression in embryonic cells. In Drosophila melanogaster (Fruit fly), this protein is ADP-ribosylation factor 1.